The sequence spans 435 residues: Serine--tRNA ligase (435 aa).

Residues 41 to 70 (QVKTEELQAQRNSRSKSIGQAKAKGDHEEA) form a disordered region. Residues 49–58 (AQRNSRSKSI) are compositionally biased toward polar residues. L-serine is bound at residue 242-244 (TAE). An ATP-binding site is contributed by 273–275 (RSE). L-serine is bound at residue glutamate 296. An ATP-binding site is contributed by 360 to 363 (EISS). Serine 396 contributes to the L-serine binding site.

This sequence belongs to the class-II aminoacyl-tRNA synthetase family. Type-1 seryl-tRNA synthetase subfamily. As to quaternary structure, homodimer. The tRNA molecule binds across the dimer.

It localises to the cytoplasm. It catalyses the reaction tRNA(Ser) + L-serine + ATP = L-seryl-tRNA(Ser) + AMP + diphosphate + H(+). The catalysed reaction is tRNA(Sec) + L-serine + ATP = L-seryl-tRNA(Sec) + AMP + diphosphate + H(+). It functions in the pathway aminoacyl-tRNA biosynthesis; selenocysteinyl-tRNA(Sec) biosynthesis; L-seryl-tRNA(Sec) from L-serine and tRNA(Sec): step 1/1. Its function is as follows. Catalyzes the attachment of serine to tRNA(Ser). Is also able to aminoacylate tRNA(Sec) with serine, to form the misacylated tRNA L-seryl-tRNA(Sec), which will be further converted into selenocysteinyl-tRNA(Sec). This is Serine--tRNA ligase from Aliivibrio fischeri (strain MJ11) (Vibrio fischeri).